A 347-amino-acid polypeptide reads, in one-letter code: Ribosomal RNA large subunit methyltransferase M (347 aa).

Residues Ser184, 217–220, Asp236, Asp256, and Asp272 contribute to the S-adenosyl-L-methionine site; that span reads APGG. Catalysis depends on Lys301, which acts as the Proton acceptor.

It belongs to the class I-like SAM-binding methyltransferase superfamily. RNA methyltransferase RlmE family. RlmM subfamily. In terms of assembly, monomer.

The protein localises to the cytoplasm. It catalyses the reaction cytidine(2498) in 23S rRNA + S-adenosyl-L-methionine = 2'-O-methylcytidine(2498) in 23S rRNA + S-adenosyl-L-homocysteine + H(+). Catalyzes the 2'-O-methylation at nucleotide C2498 in 23S rRNA. The chain is Ribosomal RNA large subunit methyltransferase M from Xanthomonas oryzae pv. oryzae (strain MAFF 311018).